Reading from the N-terminus, the 125-residue chain is Ribosome-binding factor A (125 aa).

Belongs to the RbfA family. In terms of assembly, monomer. Binds 30S ribosomal subunits, but not 50S ribosomal subunits or 70S ribosomes.

It is found in the cytoplasm. One of several proteins that assist in the late maturation steps of the functional core of the 30S ribosomal subunit. Associates with free 30S ribosomal subunits (but not with 30S subunits that are part of 70S ribosomes or polysomes). Required for efficient processing of 16S rRNA. May interact with the 5'-terminal helix region of 16S rRNA. This chain is Ribosome-binding factor A, found in Xylella fastidiosa (strain 9a5c).